A 484-amino-acid chain; its full sequence is Probable cytochrome P450 555A1 (484 aa).

A helical membrane pass occupies residues 1 to 21 (MIIIVIVVFLFYFSFLNLNLN). Cys-432 serves as a coordination point for heme.

The protein belongs to the cytochrome P450 family. The cofactor is heme.

It localises to the membrane. The protein is Probable cytochrome P450 555A1 (cyp555A1) of Dictyostelium discoideum (Social amoeba).